The sequence spans 37 residues: Large ribosomal subunit protein bL36c (37 aa).

This sequence belongs to the bacterial ribosomal protein bL36 family.

Its subcellular location is the plastid. The protein localises to the chloroplast. This is Large ribosomal subunit protein bL36c from Lotus japonicus (Lotus corniculatus var. japonicus).